The sequence spans 467 residues: Fumarate hydratase class II (467 aa).

Residues 98–100, Arg-126, 129–132, 139–141, and Thr-187 contribute to the substrate site; these read SGT, HPND, and SSN. The active-site Proton donor/acceptor is His-188. Ser-318 is an active-site residue. Substrate contacts are provided by residues Ser-319 and 324 to 326; that span reads KVN.

The protein belongs to the class-II fumarase/aspartase family. Fumarase subfamily. Homotetramer.

The protein localises to the cytoplasm. It catalyses the reaction (S)-malate = fumarate + H2O. The protein operates within carbohydrate metabolism; tricarboxylic acid cycle; (S)-malate from fumarate: step 1/1. With respect to regulation, inhibited by ATP, citrate and S-2,3-dicarboxyaziridine. Its function is as follows. Involved in the TCA cycle. FumC seems to be a backup enzyme for FumA under conditions of iron limitation and oxidative stress. Catalyzes the stereospecific interconversion of fumarate to L-malate. This Escherichia coli (strain K12) protein is Fumarate hydratase class II.